The chain runs to 512 residues: Glycerol kinase (512 aa).

Position 14 (T14) interacts with ADP. ATP is bound by residues T14, T15, and S16. Position 14 (T14) interacts with sn-glycerol 3-phosphate. Residue R18 coordinates ADP. Sn-glycerol 3-phosphate contacts are provided by R83, E84, Y135, and D244. R83, E84, Y135, D244, and Q245 together coordinate glycerol. ADP contacts are provided by T266, G309, G410, and N414. T266, G309, and G410 together coordinate ATP.

This sequence belongs to the FGGY kinase family.

The enzyme catalyses glycerol + ATP = sn-glycerol 3-phosphate + ADP + H(+). It participates in polyol metabolism; glycerol degradation via glycerol kinase pathway; sn-glycerol 3-phosphate from glycerol: step 1/1. Inhibited by fructose 1,6-bisphosphate (FBP). Functionally, key enzyme in the regulation of glycerol uptake and metabolism. Catalyzes the phosphorylation of glycerol to yield sn-glycerol 3-phosphate. The polypeptide is Glycerol kinase (Gluconobacter oxydans (strain 621H) (Gluconobacter suboxydans)).